The following is a 496-amino-acid chain: Glycerol kinase (496 aa).

Thr-12 contacts ADP. ATP-binding residues include Thr-12, Thr-13, and Ser-14. Thr-12 contacts sn-glycerol 3-phosphate. Arg-16 lines the ADP pocket. Residues Arg-82, Glu-83, and Tyr-134 each coordinate sn-glycerol 3-phosphate. Positions 82, 83, and 134 each coordinate glycerol. His-230 is subject to Phosphohistidine; by HPr. Position 244 (Asp-244) interacts with sn-glycerol 3-phosphate. Glycerol-binding residues include Asp-244 and Gln-245. Positions 266 and 309 each coordinate ADP. Residues Thr-266, Gly-309, Gln-313, and Gly-410 each coordinate ATP. 2 residues coordinate ADP: Gly-410 and Asn-414.

Belongs to the FGGY kinase family. As to quaternary structure, homotetramer and homodimer (in equilibrium). In terms of processing, the phosphoenolpyruvate-dependent sugar phosphotransferase system (PTS), including enzyme I, and histidine-containing protein (HPr) are required for the phosphorylation, which leads to the activation of the enzyme.

It catalyses the reaction glycerol + ATP = sn-glycerol 3-phosphate + ADP + H(+). It functions in the pathway polyol metabolism; glycerol degradation via glycerol kinase pathway; sn-glycerol 3-phosphate from glycerol: step 1/1. With respect to regulation, activated by phosphorylation and inhibited by fructose 1,6-bisphosphate (FBP). Functionally, key enzyme in the regulation of glycerol uptake and metabolism. Catalyzes the phosphorylation of glycerol to yield sn-glycerol 3-phosphate. The polypeptide is Glycerol kinase (Bacillus cereus (strain Q1)).